The sequence spans 432 residues: Trigger factor (432 aa).

One can recognise a PPIase FKBP-type domain in the interval 163–248; the sequence is GDIAVIDFEG…LKALNKKELP (86 aa).

Belongs to the FKBP-type PPIase family. Tig subfamily.

It localises to the cytoplasm. The catalysed reaction is [protein]-peptidylproline (omega=180) = [protein]-peptidylproline (omega=0). Its function is as follows. Involved in protein export. Acts as a chaperone by maintaining the newly synthesized protein in an open conformation. Functions as a peptidyl-prolyl cis-trans isomerase. The chain is Trigger factor from Caldanaerobacter subterraneus subsp. tengcongensis (strain DSM 15242 / JCM 11007 / NBRC 100824 / MB4) (Thermoanaerobacter tengcongensis).